A 685-amino-acid chain; its full sequence is Putative protein FAR1-RELATED SEQUENCE 10 (685 aa).

The region spanning 69–161 (EYYSTFARKS…SNVHNHELLE (93 aa)) is the FAR1 domain. The MULE domain occupies 292–388 (VVVFDTSYRS…FMSHIVSKLA (97 aa)). The SWIM-type zinc-finger motif lies at 565 to 603 (GECCVIWNPENEEIQCSCKEFEHSGILCRHTLRVLTVKN).

Belongs to the FHY3/FAR1 family.

The sequence is that of Putative protein FAR1-RELATED SEQUENCE 10 (FRS10) from Arabidopsis thaliana (Mouse-ear cress).